Consider the following 687-residue polypeptide: Dictomallein (687 aa).

Disordered stretches follow at residues 1-45 (MGNG…SRRL) and 73-112 (TAGGAAPLTPAVASPAGPTGSTPGSTPGATTAPAPSSTSA). Residues 233 to 501 (PVFGTDADVQ…QAWIASRVLA (269 aa)) enclose the Peptidase M66 domain. H393 contributes to the Zn(2+) binding site. E394 is an active-site residue. 2 residues coordinate Zn(2+): H397 and H403.

Belongs to the dictomallein family. Requires Zn(2+) as cofactor.

This Burkholderia mallei (strain NCTC 10247) protein is Dictomallein (dtmL).